A 392-amino-acid chain; its full sequence is Succinate--CoA ligase [ADP-forming] subunit beta (392 aa).

The ATP-grasp domain maps to 9–248 (KGLFRDYGVS…LHEEDPTEVK (240 aa)). ATP contacts are provided by residues Lys-50, 57-59 (GRG), Val-106, and Glu-111. 2 residues coordinate Mg(2+): Asn-203 and Asp-217. Substrate-binding positions include Asn-268 and 325 to 327 (GIV).

Belongs to the succinate/malate CoA ligase beta subunit family. Heterotetramer of two alpha and two beta subunits. The cofactor is Mg(2+).

It catalyses the reaction succinate + ATP + CoA = succinyl-CoA + ADP + phosphate. The catalysed reaction is GTP + succinate + CoA = succinyl-CoA + GDP + phosphate. Its pathway is carbohydrate metabolism; tricarboxylic acid cycle; succinate from succinyl-CoA (ligase route): step 1/1. Succinyl-CoA synthetase functions in the citric acid cycle (TCA), coupling the hydrolysis of succinyl-CoA to the synthesis of either ATP or GTP and thus represents the only step of substrate-level phosphorylation in the TCA. The beta subunit provides nucleotide specificity of the enzyme and binds the substrate succinate, while the binding sites for coenzyme A and phosphate are found in the alpha subunit. In Salinibacter ruber (strain DSM 13855 / M31), this protein is Succinate--CoA ligase [ADP-forming] subunit beta.